We begin with the raw amino-acid sequence, 490 residues long: MARFELQKLYIDGGYVDASNTETFDSINPANGEVLAKIQRASKEDVERAVVAAEKGQKIWAAMTAVERSRILRRAVDILRERNDELAALETLDTGKAISETRYVDIVTGADVLEYYAGLVPAIEGEQIPLRDSSFVYTRREPLGVVAGIGAWNYPIQIALWKSAPALAAGNAMIFKPSEVTSLTTLKLAEIYTEAGVPNGVFNVLTGSGREVGTWITEHPRIEKVSFTGGTDTGKKVMASASSSSLKEVTMELGGKSPLIVFDDADLDRAADIAMMANFYSSGQVCTNGTRVFVPNALKGEFEAKILERVKRIRPGNPEDENINFGPLVSFEHMESVLGYIAKGKEQGARLLCGGDRLTGGVFDKGAFVAATVFTDCTDEMTIVREEIFGPVMSILGYDTEDEVVRRANDTDFGLAAGIVTRDLNRAHRVIHLLEAGICWINAWGESAAQMPVGGYKQSGVGRENGISSLAQYTRIKSVQIELGDYASVF.

K(+) is bound by residues serine 26, isoleucine 27, and aspartate 93. 150-152 (GAW) contributes to the NAD(+) binding site. Lysine 162 acts as the Charge relay system in catalysis. Position 176–179 (176–179 (KPSE)) interacts with NAD(+). Position 180 (valine 180) interacts with K(+). 230–233 (GTDT) contributes to the NAD(+) binding site. Residue leucine 246 coordinates K(+). Residue glutamate 252 is the Proton acceptor of the active site. NAD(+)-binding residues include glycine 254, cysteine 286, and glutamate 387. The active-site Nucleophile is cysteine 286. Position 286 is a cysteine sulfenic acid (-SOH) (cysteine 286). Positions 457 and 460 each coordinate K(+). Glutamate 464 functions as the Charge relay system in the catalytic mechanism.

This sequence belongs to the aldehyde dehydrogenase family. As to quaternary structure, dimer of dimers. The cofactor is K(+).

It carries out the reaction betaine aldehyde + NAD(+) + H2O = glycine betaine + NADH + 2 H(+). It participates in amine and polyamine biosynthesis; betaine biosynthesis via choline pathway; betaine from betaine aldehyde: step 1/1. Its function is as follows. Involved in the biosynthesis of the osmoprotectant glycine betaine. Catalyzes the irreversible oxidation of betaine aldehyde to the corresponding acid. The polypeptide is Betaine aldehyde dehydrogenase (Pseudomonas syringae pv. tomato (strain ATCC BAA-871 / DC3000)).